Here is a 520-residue protein sequence, read N- to C-terminus: Eukaryotic translation initiation factor 3 subunit L (520 aa).

Residues 278–478 (FATYYYVGIC…ELDIALENDL (201 aa)) enclose the PCI domain.

It belongs to the eIF-3 subunit L family. As to quaternary structure, component of the eukaryotic translation initiation factor 3 (eIF-3) complex.

It is found in the cytoplasm. Component of the eukaryotic translation initiation factor 3 (eIF-3) complex, which is involved in protein synthesis of a specialized repertoire of mRNAs and, together with other initiation factors, stimulates binding of mRNA and methionyl-tRNAi to the 40S ribosome. The eIF-3 complex specifically targets and initiates translation of a subset of mRNAs involved in cell proliferation. The chain is Eukaryotic translation initiation factor 3 subunit L from Yarrowia lipolytica (strain CLIB 122 / E 150) (Yeast).